Here is a 161-residue protein sequence, read N- to C-terminus: uncharacterized protein (161 aa).

A signal peptide spans 1–27 (MKKIGLLFMLCLAALFTIGFPAQQADA).

The protein localises to the secreted. This is an uncharacterized protein from Bacillus subtilis (strain 168).